The primary structure comprises 349 residues: Isopentenyl-diphosphate delta-isomerase (349 aa).

6 to 7 is a binding site for substrate; sequence RK. FMN-binding positions include 62–64, Ser-93, and Asn-122; that span reads AMT. Gln-152 is a binding site for substrate. Glu-153 contributes to the Mg(2+) binding site. FMN-binding positions include Lys-184, Thr-214, 258-259, and 280-281; these read GG and AG.

This sequence belongs to the IPP isomerase type 2 family. Homooctamer. Dimer of tetramers. FMN is required as a cofactor. The cofactor is NADPH. It depends on Mg(2+) as a cofactor.

It is found in the cytoplasm. The catalysed reaction is isopentenyl diphosphate = dimethylallyl diphosphate. Functionally, involved in the biosynthesis of isoprenoids. Catalyzes the 1,3-allylic rearrangement of the homoallylic substrate isopentenyl (IPP) to its allylic isomer, dimethylallyl diphosphate (DMAPP). This is Isopentenyl-diphosphate delta-isomerase from Bacillus licheniformis (strain ATCC 14580 / DSM 13 / JCM 2505 / CCUG 7422 / NBRC 12200 / NCIMB 9375 / NCTC 10341 / NRRL NRS-1264 / Gibson 46).